A 381-amino-acid polypeptide reads, in one-letter code: CD2 homolog (381 aa).

An N-terminal signal peptide occupies residues 1-16 (MIIKLIFLICFKIVLS). The Extracellular portion of the chain corresponds to 17-208 (INYWVRYNDT…QNYFLENIHT (192 aa)). Asparagine 24, asparagine 73, asparagine 77, asparagine 85, asparagine 91, asparagine 104, asparagine 121, asparagine 133, asparagine 144, asparagine 176, asparagine 183, and asparagine 189 each carry an N-linked (GlcNAc...) asparagine; by host glycan. 2 disulfide bridges follow: cysteine 122/cysteine 190 and cysteine 129/cysteine 173. A helical transmembrane segment spans residues 209 to 229 (LFYMIIFIVSGITISIFISII). At 230-381 (TFLSLRKRKK…ISLIHVDRII (152 aa)) the chain is on the cytoplasmic side. The tract at residues 243-278 (EIESPPPESNEEEQCQHDDTTSIHEPSPREPLLPKP) is disordered. Residues 256 to 270 (QCQHDDTTSIHEPSP) show a composition bias toward basic and acidic residues. A run of 7 repeats spans residues 305-310 (KPCPPP), 311-316 (KPCPPP), 317-322 (KPCPPP), 323-328 (KPCPPP), 329-334 (KPCPPP), 335-340 (KPCPPP), and 341-346 (KPCPPP). A 7 X 6 AA tandem repeats of K-[LP]-C-[PRS]-[PS]-[PS] region spans residues 305–334 (KPCPPPKPCPPPKPCPPPKPCPPPKPCPPP). A disordered region spans residues 341–362 (KPCPPPESYSPPKPLPSIPLLP).

The protein belongs to the asfivirus CD2 homolog protein family. As to quaternary structure, both glycosylated and nonglycosylated forms interact (via C-terminus) with the host AP-1 complex. In terms of processing, cleaved into two fragments of 63 kDa and 26 kDa containing respectively the glycosylated N-terminus and the nonglycosylated C-terminus. A full-length 89-kDa glycosylated form also exists.

Its subcellular location is the host membrane. It is found in the virion membrane. The protein resides in the host Golgi apparatus. In terms of biological role, may play an immunosuppressive role by inhibiting lymphocyte proliferation and subsequently facilitating viral replication and generalization of infection. Responsible for viral hemadsorption, which may help viral spread. Increases virus replication in the tick vector at the step of virus uptake or replication in the tick gut. May play a role in the host Golgi reorganization to yield viral factories. May play a role in host cell penetration. This is CD2 homolog from African swine fever virus (isolate Warthog/Namibia/Wart80/1980) (ASFV).